The sequence spans 39 residues: Photosystem II reaction center protein J (39 aa).

A helical transmembrane segment spans residues 7 to 27; the sequence is IPLWLVATVAGMGVITLLGIF.

It belongs to the PsbJ family. As to quaternary structure, PSII is composed of 1 copy each of membrane proteins PsbA, PsbB, PsbC, PsbD, PsbE, PsbF, PsbH, PsbI, PsbJ, PsbK, PsbL, PsbM, PsbT, PsbX, PsbY, PsbZ, Psb30/Ycf12, peripheral proteins PsbO, CyanoQ (PsbQ), PsbU, PsbV and a large number of cofactors. It forms dimeric complexes.

It localises to the cellular thylakoid membrane. Functionally, one of the components of the core complex of photosystem II (PSII). PSII is a light-driven water:plastoquinone oxidoreductase that uses light energy to abstract electrons from H(2)O, generating O(2) and a proton gradient subsequently used for ATP formation. It consists of a core antenna complex that captures photons, and an electron transfer chain that converts photonic excitation into a charge separation. This Cyanothece sp. (strain PCC 7425 / ATCC 29141) protein is Photosystem II reaction center protein J.